The primary structure comprises 294 residues: Acetyl-coenzyme A carboxylase carboxyl transferase subunit beta (294 aa).

The 265-residue stretch at I30–E294 folds into the CoA carboxyltransferase N-terminal domain. Zn(2+)-binding residues include C34, C37, C53, and C56. The segment at C34–C56 adopts a C4-type zinc-finger fold.

This sequence belongs to the AccD/PCCB family. As to quaternary structure, acetyl-CoA carboxylase is a heterohexamer composed of biotin carboxyl carrier protein (AccB), biotin carboxylase (AccC) and two subunits each of ACCase subunit alpha (AccA) and ACCase subunit beta (AccD). It depends on Zn(2+) as a cofactor.

Its subcellular location is the cytoplasm. It carries out the reaction N(6)-carboxybiotinyl-L-lysyl-[protein] + acetyl-CoA = N(6)-biotinyl-L-lysyl-[protein] + malonyl-CoA. It participates in lipid metabolism; malonyl-CoA biosynthesis; malonyl-CoA from acetyl-CoA: step 1/1. Functionally, component of the acetyl coenzyme A carboxylase (ACC) complex. Biotin carboxylase (BC) catalyzes the carboxylation of biotin on its carrier protein (BCCP) and then the CO(2) group is transferred by the transcarboxylase to acetyl-CoA to form malonyl-CoA. This chain is Acetyl-coenzyme A carboxylase carboxyl transferase subunit beta, found in Listeria monocytogenes serotype 4b (strain F2365).